The following is a 228-amino-acid chain: Prolactin-2B1 (228 aa).

An N-terminal signal peptide occupies residues 1–31; sequence MLLSLTQMLSSRASSRLFLVSYLLLWENVVS. Disulfide bonds link Cys-89–Cys-194 and Cys-203–Cys-228.

This sequence belongs to the somatotropin/prolactin family. Expressed specifically in placenta. Expressed at high levels in trophoblast cells from both junctional and labyrinth zones of the chorioallantoic placenta the last week of gestation.

Its subcellular location is the secreted. The polypeptide is Prolactin-2B1 (Prl2b1) (Mus musculus (Mouse)).